Consider the following 42-residue polypeptide: uncharacterized protein (42 aa).

This is an uncharacterized protein from Escherichia coli (Bacteriophage T4).